Consider the following 165-residue polypeptide: PTS system glucose-specific EIIA component (165 aa).

Positions 33 to 137 (DPVFAGRMMG…STITPIVITN (105 aa)) constitute a PTS EIIA type-1 domain. Residues His70 and His85 each contribute to the Zn(2+) site. His85 serves as the catalytic Tele-phosphohistidine intermediate; for EIIA activity. Phosphohistidine; by HPr is present on His85.

As to quaternary structure, heterodimer with glycerol kinase (glpk). It depends on Zn(2+) as a cofactor.

The protein localises to the cytoplasm. The phosphoenolpyruvate-dependent sugar phosphotransferase system (sugar PTS), a major carbohydrate active transport system, catalyzes the phosphorylation of incoming sugar substrates concomitantly with their translocation across the cell membrane. The enzyme II complex composed of PtsG and Crr is involved in glucose transport. The sequence is that of PTS system glucose-specific EIIA component (crr) from Bacillus cereus (strain ATCC 14579 / DSM 31 / CCUG 7414 / JCM 2152 / NBRC 15305 / NCIMB 9373 / NCTC 2599 / NRRL B-3711).